The primary structure comprises 306 residues: Methionyl-tRNA formyltransferase (306 aa).

Position 110 to 113 (Ser110 to Pro113) interacts with (6S)-5,6,7,8-tetrahydrofolate.

The protein belongs to the Fmt family.

It catalyses the reaction L-methionyl-tRNA(fMet) + (6R)-10-formyltetrahydrofolate = N-formyl-L-methionyl-tRNA(fMet) + (6S)-5,6,7,8-tetrahydrofolate + H(+). Its function is as follows. Attaches a formyl group to the free amino group of methionyl-tRNA(fMet). The formyl group appears to play a dual role in the initiator identity of N-formylmethionyl-tRNA by promoting its recognition by IF2 and preventing the misappropriation of this tRNA by the elongation apparatus. The sequence is that of Methionyl-tRNA formyltransferase from Brucella melitensis biotype 2 (strain ATCC 23457).